Here is a 214-residue protein sequence, read N- to C-terminus: Probable transaldolase (214 aa).

Residue lysine 83 is the Schiff-base intermediate with substrate of the active site.

The protein belongs to the transaldolase family. Type 3B subfamily.

It localises to the cytoplasm. It carries out the reaction D-sedoheptulose 7-phosphate + D-glyceraldehyde 3-phosphate = D-erythrose 4-phosphate + beta-D-fructose 6-phosphate. Its pathway is carbohydrate degradation; pentose phosphate pathway; D-glyceraldehyde 3-phosphate and beta-D-fructose 6-phosphate from D-ribose 5-phosphate and D-xylulose 5-phosphate (non-oxidative stage): step 2/3. In terms of biological role, transaldolase is important for the balance of metabolites in the pentose-phosphate pathway. The polypeptide is Probable transaldolase (Maridesulfovibrio salexigens (strain ATCC 14822 / DSM 2638 / NCIMB 8403 / VKM B-1763) (Desulfovibrio salexigens)).